Here is a 397-residue protein sequence, read N- to C-terminus: Tryptophan synthase beta chain (397 aa).

Position 86 is an N6-(pyridoxal phosphate)lysine (Lys86).

It belongs to the TrpB family. As to quaternary structure, tetramer of two alpha and two beta chains. The cofactor is pyridoxal 5'-phosphate.

The catalysed reaction is (1S,2R)-1-C-(indol-3-yl)glycerol 3-phosphate + L-serine = D-glyceraldehyde 3-phosphate + L-tryptophan + H2O. It participates in amino-acid biosynthesis; L-tryptophan biosynthesis; L-tryptophan from chorismate: step 5/5. Functionally, the beta subunit is responsible for the synthesis of L-tryptophan from indole and L-serine. The protein is Tryptophan synthase beta chain of Aeromonas hydrophila subsp. hydrophila (strain ATCC 7966 / DSM 30187 / BCRC 13018 / CCUG 14551 / JCM 1027 / KCTC 2358 / NCIMB 9240 / NCTC 8049).